Reading from the N-terminus, the 1025-residue chain is Multidrug resistance protein MdtC (1025 aa).

The next 12 membrane-spanning stretches (helical) occupy residues Phe-3–Leu-23, Glu-333–Leu-353, Ile-360–Cys-380, Leu-387–Leu-407, Val-431–Leu-451, Phe-463–Pro-483, Leu-528–Pro-548, Val-853–Ser-873, Val-875–Leu-895, Leu-897–Val-917, Pro-953–Gly-973, and Ile-984–Val-1004.

Belongs to the resistance-nodulation-cell division (RND) (TC 2.A.6) family. MdtC subfamily. As to quaternary structure, part of a tripartite efflux system composed of MdtA, MdtB and MdtC. MdtC forms a heteromultimer with MdtB.

It is found in the cell inner membrane. In Shigella sonnei (strain Ss046), this protein is Multidrug resistance protein MdtC.